Here is a 341-residue protein sequence, read N- to C-terminus: MDHEAEAHRTDLMTITRYVLNEQSRHQESRGDFTILLSHIVLGCKFVCSAVNKAGLAKLIGLAGETNVQGGSKRKLDVLSNEVFVKALISSGRTCILVSEEDEEATFVDPSLRGKYCVVFDPLDGSSNIDCGVSIGTIFGVYMVKDKDNVTLDEVLQPGKNMLAAGYCMYGSSCTLVLSTGSGVNGFTLDPSLGEFILTHPDIKIPKKGKIYSVNEGNAKNWDGPTTKYVEKCKFPKDGDSPKSLRYIGSMVADVHRTLLYGGIFLYPADKKSPNGKLRVLYEVFPMSFLMEQAGGQAFTGKQRALDLVPTKIHQRSPIFLGSYDEVEEIKALYAAEENTA.

Mg(2+) is bound by residues Glu-100, Asp-121, Leu-123, and Asp-124. Substrate is bound by residues Asp-124–Ser-127, Asn-215, Tyr-247, Tyr-267, and Lys-277. Residue Glu-283 coordinates Mg(2+).

This sequence belongs to the FBPase class 1 family. Requires Mg(2+) as cofactor.

Its subcellular location is the cytoplasm. The enzyme catalyses beta-D-fructose 1,6-bisphosphate + H2O = beta-D-fructose 6-phosphate + phosphate. In Musa acuminata (Banana), this protein is Fructose-1,6-bisphosphatase, cytosolic (FBPban1).